The primary structure comprises 987 residues: Mediator of RNA polymerase II transcription subunit 24 (987 aa).

Short sequence motifs (LXXLL motif) lie at residues 128-132 (LHWLL), 344-348 (LTPLL), 446-450 (LDLLL), 555-559 (LVALL), 786-790 (LPGLL), and 855-859 (LMRLL). Residues Ser-860 and Ser-871 each carry the phosphoserine modification.

This sequence belongs to the Mediator complex subunit 24 family. Component of the Mediator complex, which is composed of MED1, MED4, MED6, MED7, MED8, MED9, MED10, MED11, MED12, MED13, MED13L, MED14, MED15, MED16, MED17, MED18, MED19, MED20, MED21, MED22, MED23, MED24, MED25, MED26, MED27, MED29, MED30, MED31, CCNC, CDK8 and CDC2L6/CDK11. The MED12, MED13, CCNC and CDK8 subunits form a distinct module termed the CDK8 module. Mediator containing the CDK8 module is less active than Mediator lacking this module in supporting transcriptional activation. Individual preparations of the Mediator complex lacking one or more distinct subunits have been variously termed ARC, CRSP, DRIP, PC2, SMCC and TRAP. Interacts with AR.

The protein localises to the nucleus. Functionally, component of the Mediator complex, a coactivator involved in the regulated transcription of nearly all RNA polymerase II-dependent genes. Mediator functions as a bridge to convey information from gene-specific regulatory proteins to the basal RNA polymerase II transcription machinery. Mediator is recruited to promoters by direct interactions with regulatory proteins and serves as a scaffold for the assembly of a functional preinitiation complex with RNA polymerase II and the general transcription factors. The sequence is that of Mediator of RNA polymerase II transcription subunit 24 (Med24) from Rattus norvegicus (Rat).